A 32-amino-acid polypeptide reads, in one-letter code: Yop proteins translocation protein A (32 aa).

This chain is Yop proteins translocation protein A (yscA), found in Yersinia enterocolitica serotype O:8 / biotype 1B (strain NCTC 13174 / 8081).